The following is a 205-amino-acid chain: Ribosome maturation factor RimP (205 aa).

Belongs to the RimP family.

The protein localises to the cytoplasm. Functionally, required for maturation of 30S ribosomal subunits. This Sinorhizobium fredii (strain NBRC 101917 / NGR234) protein is Ribosome maturation factor RimP.